The primary structure comprises 179 residues: SCAN domain-containing protein 1 (179 aa).

Residues 1 to 104 (MAATEPILAA…PGPAGSRLGP (104 aa)) are disordered. The span at 52–80 (SPNAAVPEAIPTPRAAASAALELPLGPAP) shows a compositional bias: low complexity. Positions 108-166 (RQRFRQFRYQDAAGPREAFRQLRELSRQWLRPDIRTKEQIVEMLVQEQLLAILPEAARA) constitute an SCAN box domain.

In terms of assembly, interacts with ZNF202.

The protein localises to the nucleus. May regulate transcriptional activity. The sequence is that of SCAN domain-containing protein 1 (SCAND1) from Homo sapiens (Human).